A 764-amino-acid polypeptide reads, in one-letter code: 5-methyltetrahydropteroyltriglutamate--homocysteine methyltransferase (764 aa).

5-methyltetrahydropteroyltri-L-glutamate contacts are provided by residues 16-19 and Lys-121; that span reads RELK. L-homocysteine-binding positions include 440–442 and Glu-493; that span reads IGS. L-methionine is bound by residues 440–442 and Glu-493; that span reads IGS. 5-methyltetrahydropteroyltri-L-glutamate contacts are provided by residues 524-525 and Trp-570; that span reads RC. Asp-608 is an L-homocysteine binding site. Asp-608 provides a ligand contact to L-methionine. 5-methyltetrahydropteroyltri-L-glutamate is bound at residue Glu-614. Residues His-650, Cys-652, and Glu-674 each coordinate Zn(2+). The active-site Proton donor is His-703. Cys-735 contributes to the Zn(2+) binding site.

It belongs to the vitamin-B12 independent methionine synthase family. It depends on Zn(2+) as a cofactor.

It catalyses the reaction 5-methyltetrahydropteroyltri-L-glutamate + L-homocysteine = tetrahydropteroyltri-L-glutamate + L-methionine. It functions in the pathway amino-acid biosynthesis; L-methionine biosynthesis via de novo pathway; L-methionine from L-homocysteine (MetE route): step 1/1. In terms of biological role, catalyzes the transfer of a methyl group from 5-methyltetrahydrofolate to homocysteine resulting in methionine formation. The protein is 5-methyltetrahydropteroyltriglutamate--homocysteine methyltransferase of Burkholderia ambifaria (strain ATCC BAA-244 / DSM 16087 / CCUG 44356 / LMG 19182 / AMMD) (Burkholderia cepacia (strain AMMD)).